We begin with the raw amino-acid sequence, 163 residues long: MDEKDVATQPQETGQNPRLSGQDEDPGRPEGAEAPPSEGALAPHARRSEAVGPKPPAPGGKLLSLKGDRAFQRLRKGRAGRGRYVSVKWLPAAELRVGIVVSKKVGKAVVRNKVKRRLREILRRLHLPQAHLLVVASPEAREADFAELFRDVVRALRKSGLVQ.

Positions methionine 1–aspartate 68 are disordered. Positions threonine 8–leucine 19 are enriched in polar residues.

It belongs to the RnpA family. In terms of assembly, consists of a catalytic RNA component (M1 or rnpB) and a protein subunit.

It carries out the reaction Endonucleolytic cleavage of RNA, removing 5'-extranucleotides from tRNA precursor.. Functionally, RNaseP catalyzes the removal of the 5'-leader sequence from pre-tRNA to produce the mature 5'-terminus. It can also cleave other RNA substrates such as 4.5S RNA. The protein component plays an auxiliary but essential role in vivo by binding to the 5'-leader sequence and broadening the substrate specificity of the ribozyme. The sequence is that of Ribonuclease P protein component from Thermus thermophilus (strain ATCC BAA-163 / DSM 7039 / HB27).